Here is a 284-residue protein sequence, read N- to C-terminus: Peflin (284 aa).

The disordered stretch occupies residues 1–111 (MASYPYRQGC…QPGLYGQGGA (111 aa)). The segment covering 8–26 (QGCPGAAGQAPGAPPGSYY) has biased composition (low complexity). Repeat copies occupy residues 21–29 (PPGSYYPGP), 31–39 (NSGGQYGSG), 41–49 (PPGGGYGGP), 50–58 (APGGPYGPP), 59–67 (AGGGPYGHP), 76–84 (TPGGPYGGA), 85–92 (APGGPYGQ), 93–100 (PPPSSYGA), and 101–109 (QQPGLYGQG). The segment at 21 to 109 (PPGSYYPGPP…AQQPGLYGQG (89 aa)) is 9 X 9 AA approximate tandem repeat of [AP]-P-G-G-P-Y-G-G-P-P. The span at 34–50 (GQYGSGLPPGGGYGGPA) shows a compositional bias: gly residues. Over residues 65-75 (GHPNPGMFPSG) the composition is skewed to low complexity. Residues 76–90 (TPGGPYGGAAPGGPY) show a composition bias toward gly residues. EF-hand domains follow at residues 114–149 (NVDP…CNWS), 155–183 (TCLM…WKFI), 181–216 (KFIQ…MGYN), 217–253 (LSPQ…LQVL), and 254–283 (TEAF…ASRM). Residues aspartate 127, aspartate 129, serine 131, and tyrosine 133 each contribute to the Ca(2+) site. Lysine 137 is covalently cross-linked (Glycyl lysine isopeptide (Lys-Gly) (interchain with G-Cter in ubiquitin)). Glutamate 138 lines the Ca(2+) pocket. Ca(2+) is bound by residues aspartate 194, aspartate 196, serine 198, serine 200, and glutamate 205. The interval 204–284 (TELQQALSQM…FVTMTASRML (81 aa)) is required for interaction with PDCD6.

In terms of assembly, heterodimer; heterodimerizes (via the EF-hand 5) with PDCD6. Dissociates from PDCD6 in presence of calcium. Post-translationally, ubiquitinated by the BCR(KLHL12) E3 ubiquitin ligase complex.

The protein localises to the cytoplasm. It localises to the endoplasmic reticulum. Its subcellular location is the membrane. The protein resides in the cytoplasmic vesicle. It is found in the COPII-coated vesicle membrane. In terms of biological role, calcium-binding protein that acts as an adapter that bridges unrelated proteins or stabilizes weak protein-protein complexes in response to calcium. Together with PDCD6, acts as a calcium-dependent adapter for the BCR(KLHL12) complex, a complex involved in endoplasmic reticulum (ER)-Golgi transport by regulating the size of COPII coats. In response to cytosolic calcium increase, the heterodimer formed with PDCD6 interacts with, and bridges together the BCR(KLHL12) complex and SEC31 (SEC31A or SEC31B), promoting monoubiquitination of SEC31 and subsequent collagen export, which is required for neural crest specification. Its role in the heterodimer formed with PDCD6 is however unclear: some evidence shows that PEF1 and PDCD6 work together and promote association between PDCD6 and SEC31 in presence of calcium. Other reports show that PEF1 dissociates from PDCD6 in presence of calcium, and may act as a negative regulator of PDCD6. Also acts as a negative regulator of ER-Golgi transport; possibly by inhibiting interaction between PDCD6 and SEC31. This Homo sapiens (Human) protein is Peflin.